The following is a 142-amino-acid chain: MKTFTAKPETVKREWFVVDAAGQTLGRLATEIASRLRGKHKPEYTPHVDTGDYIVVINAEQVRVTGAKSSDKMYYSHSGFPGGIKEINFEKLIAKAPERVIETAVKGMLPKNPLGRDMYRKLKVYAGAAHPHTAQQPQELKI.

This sequence belongs to the universal ribosomal protein uL13 family. In terms of assembly, part of the 50S ribosomal subunit.

This protein is one of the early assembly proteins of the 50S ribosomal subunit, although it is not seen to bind rRNA by itself. It is important during the early stages of 50S assembly. The protein is Large ribosomal subunit protein uL13 of Pseudomonas entomophila (strain L48).